The chain runs to 107 residues: Replication initiation control protein YabA (107 aa).

Zn(2+)-binding residues include His-81, Cys-83, Cys-97, and Cys-100.

It belongs to the YabA family. In terms of assembly, homotetramer. Interacts with both DnaA and DnaN, acting as a bridge between these two proteins. Requires Zn(2+) as cofactor.

Its subcellular location is the cytoplasm. It localises to the nucleoid. In terms of biological role, involved in control of chromosome replication initiation. Inhibits the cooperative binding of DnaA to the oriC region, thus negatively regulating initiation of chromosome replication. Inhibits the ability of DnaA-ATP to form a helix on DNA; does not disassemble preformed DnaA-DNA helices. Decreases the residence time of DnaA on the chromosome at its binding sites (oriC, replication forks and promoter-binding sites). Tethers DnaA to the replication machinery via the DNA polymerase beta sliding clamp subunit (dnaN). Associates with oriC and other DnaA targets on the chromosome in a DnaA-dependent manner. This is Replication initiation control protein YabA from Streptococcus equi subsp. equi (strain 4047).